We begin with the raw amino-acid sequence, 465 residues long: Argininosuccinate lyase (465 aa).

Belongs to the lyase 1 family. Argininosuccinate lyase subfamily.

The protein localises to the cytoplasm. It catalyses the reaction 2-(N(omega)-L-arginino)succinate = fumarate + L-arginine. Its pathway is amino-acid biosynthesis; L-arginine biosynthesis; L-arginine from L-ornithine and carbamoyl phosphate: step 3/3. This chain is Argininosuccinate lyase, found in Hyphomonas neptunium (strain ATCC 15444).